A 415-amino-acid chain; its full sequence is Hydroxysteroid dehydrogenase-like protein 2 (415 aa).

NADP(+)-binding positions include 17 to 23 (GASRGIG), K42, and D74. The active-site Proton acceptor is the Y168. Residue K172 participates in NADP(+) binding. Residues 304–412 (AGPVSEMFNT…KLEKMMAMMK (109 aa)) form the SCP2 domain.

The protein belongs to the short-chain dehydrogenases/reductases (SDR) family.

It is found in the peroxisome. The protein localises to the mitochondrion. Functionally, has apparently no steroid dehydrogenase activity. Might act as a metabolic regulator that affects systemic adaptation to nutritional cues. This Danio rerio (Zebrafish) protein is Hydroxysteroid dehydrogenase-like protein 2 (hsdl2).